Consider the following 339-residue polypeptide: Thermospermine synthase ACAULIS5 (339 aa).

The region spanning 33 to 270 (CHWYEETIDD…DTWGWVMASD (238 aa)) is the PABS domain. S-adenosyl 3-(methylsulfanyl)propylamine is bound by residues glutamine 62, glutamate 117, aspartate 137, and 168 to 169 (DA). Aspartate 186 acts as the Proton acceptor in catalysis.

Belongs to the spermidine/spermine synthase family. As to expression, highly expressed in stem internodes and roots. Lower levels in young seedlings before flowering and rosette leaves. Expressed in the vascular tissues. Restricted to procambial and/or provascular cells during primary root development and early leaves development.

It catalyses the reaction S-adenosyl 3-(methylsulfanyl)propylamine + spermidine = thermospermine + S-methyl-5'-thioadenosine + H(+). Required for correct xylem specification through regulation of the lifetime of the xylem elements. Prevents premature death of the xylem vessel elements. This Arabidopsis thaliana (Mouse-ear cress) protein is Thermospermine synthase ACAULIS5 (ACL5).